Reading from the N-terminus, the 215-residue chain is Deoxyribose-phosphate aldolase (215 aa).

Asp89 serves as the catalytic Proton donor/acceptor. Lys150 (schiff-base intermediate with acetaldehyde) is an active-site residue. The active-site Proton donor/acceptor is the Lys174.

The protein belongs to the DeoC/FbaB aldolase family. DeoC type 1 subfamily.

The protein localises to the cytoplasm. It carries out the reaction 2-deoxy-D-ribose 5-phosphate = D-glyceraldehyde 3-phosphate + acetaldehyde. Its pathway is carbohydrate degradation; 2-deoxy-D-ribose 1-phosphate degradation; D-glyceraldehyde 3-phosphate and acetaldehyde from 2-deoxy-alpha-D-ribose 1-phosphate: step 2/2. Functionally, catalyzes a reversible aldol reaction between acetaldehyde and D-glyceraldehyde 3-phosphate to generate 2-deoxy-D-ribose 5-phosphate. The sequence is that of Deoxyribose-phosphate aldolase from Natronomonas pharaonis (strain ATCC 35678 / DSM 2160 / CIP 103997 / JCM 8858 / NBRC 14720 / NCIMB 2260 / Gabara) (Halobacterium pharaonis).